Here is a 208-residue protein sequence, read N- to C-terminus: MLVAIEGIDGAGKTTLARSLALKLRGVGLETVVSKEPTNGPWGTLLRQSAVTGRFSPEEEVDVLLRDRRQHVEDLIVPMIGRGAVVILDRYFPSMVAYQGAAGLPVDALLEANAFAPRPDVLLLLDVPPVIGLQRIWERGSTPNHFETTENLSRCRDIFLALELPSKRVIDATANAETVFSAALGLVMEVLRVRLGALGAVVLERLAG.

7-14 (GIDGAGKT) is an ATP binding site.

Belongs to the thymidylate kinase family.

The catalysed reaction is dTMP + ATP = dTDP + ADP. Functionally, phosphorylation of dTMP to form dTDP in both de novo and salvage pathways of dTTP synthesis. This is Thymidylate kinase from Xylella fastidiosa (strain Temecula1 / ATCC 700964).